The sequence spans 329 residues: Basic leucine zipper 61 (329 aa).

2 disordered regions span residues 1 to 22 (MAQL…FSSQ) and 98 to 204 (DDVH…HDPK). Residues 10-22 (TMTTPNWPDFSSQ) are compositionally biased toward polar residues. The segment covering 119–133 (PTRSSSNTSTPSDHN) has biased composition (low complexity). A compositionally biased stretch (basic and acidic residues) spans 139–154 (DNNKEAPPSDHDHHMD). The span at 155–169 (NNVANQNNAAGNNYN) shows a compositional bias: low complexity. A bZIP domain is found at 202 to 254 (DPKRVKRILANRQSAQRSRVRKLQYISELERSVTSLQTEVSVLSPRVAFLDHQ). A basic motif region spans residues 204 to 223 (KRVKRILANRQSAQRSRVRK). Positions 230–251 (LERSVTSLQTEVSVLSPRVAFL) are leucine-zipper. Residues 304–313 (KMENNVSDQS) show a composition bias toward polar residues. The interval 304–329 (KMENNVSDQSPADIKPSVEKEQLLNV) is disordered. A compositionally biased stretch (basic and acidic residues) spans 319 to 329 (PSVEKEQLLNV).

As to quaternary structure, forms heterodimers with BZIP18, BZIP43 and VIP1/BZIP51.

The protein resides in the nucleus. In terms of biological role, transcriptional activator. The protein is Basic leucine zipper 61 of Arabidopsis thaliana (Mouse-ear cress).